The sequence spans 436 residues: Peptidase B (436 aa).

The Mn(2+) site is built by Lys-201 and Asp-206. Residue Lys-213 is part of the active site. Mn(2+) is bound by residues Asp-224, Asp-283, and Glu-285. Residue Arg-287 is part of the active site.

It belongs to the peptidase M17 family. In terms of assembly, homohexamer. Requires Mn(2+) as cofactor.

It localises to the cytoplasm. The catalysed reaction is Release of an N-terminal amino acid, Xaa, from a peptide or arylamide. Xaa is preferably Glu or Asp but may be other amino acids, including Leu, Met, His, Cys and Gln.. In terms of biological role, probably plays an important role in intracellular peptide degradation. This is Peptidase B from Pectobacterium atrosepticum (strain SCRI 1043 / ATCC BAA-672) (Erwinia carotovora subsp. atroseptica).